The following is a 375-amino-acid chain: Succinyl-diaminopimelate desuccinylase (375 aa).

H66 provides a ligand contact to Zn(2+). D68 is a catalytic residue. D99 serves as a coordination point for Zn(2+). E133 serves as the catalytic Proton acceptor. Zn(2+)-binding residues include E134, E162, and H348.

This sequence belongs to the peptidase M20A family. DapE subfamily. As to quaternary structure, homodimer. The cofactor is Zn(2+). It depends on Co(2+) as a cofactor.

It carries out the reaction N-succinyl-(2S,6S)-2,6-diaminopimelate + H2O = (2S,6S)-2,6-diaminopimelate + succinate. Its pathway is amino-acid biosynthesis; L-lysine biosynthesis via DAP pathway; LL-2,6-diaminopimelate from (S)-tetrahydrodipicolinate (succinylase route): step 3/3. In terms of biological role, catalyzes the hydrolysis of N-succinyl-L,L-diaminopimelic acid (SDAP), forming succinate and LL-2,6-diaminopimelate (DAP), an intermediate involved in the bacterial biosynthesis of lysine and meso-diaminopimelic acid, an essential component of bacterial cell walls. The sequence is that of Succinyl-diaminopimelate desuccinylase from Aeromonas hydrophila subsp. hydrophila (strain ATCC 7966 / DSM 30187 / BCRC 13018 / CCUG 14551 / JCM 1027 / KCTC 2358 / NCIMB 9240 / NCTC 8049).